A 592-amino-acid polypeptide reads, in one-letter code: Aspartate--tRNA(Asp/Asn) ligase (592 aa).

Residue E176 coordinates L-aspartate. The interval 200-203 (QLYK) is aspartate. R222 contributes to the L-aspartate binding site. ATP contacts are provided by residues 222–224 (RDE) and Q231. H452 serves as a coordination point for L-aspartate. E486 is a binding site for ATP. L-aspartate is bound at residue R493. ATP is bound at residue 538 to 541 (GVDR).

The protein belongs to the class-II aminoacyl-tRNA synthetase family. Type 1 subfamily. As to quaternary structure, homodimer.

The protein localises to the cytoplasm. It carries out the reaction tRNA(Asx) + L-aspartate + ATP = L-aspartyl-tRNA(Asx) + AMP + diphosphate. Its function is as follows. Aspartyl-tRNA synthetase with relaxed tRNA specificity since it is able to aspartylate not only its cognate tRNA(Asp) but also tRNA(Asn). Reaction proceeds in two steps: L-aspartate is first activated by ATP to form Asp-AMP and then transferred to the acceptor end of tRNA(Asp/Asn). The polypeptide is Aspartate--tRNA(Asp/Asn) ligase (Rhodopirellula baltica (strain DSM 10527 / NCIMB 13988 / SH1)).